The sequence spans 146 residues: Hemoglobin subunit beta (146 aa).

Residue V1 is modified to N-acetylvaline. The Globin domain occupies H2 to H146. H63 is a binding site for heme b. Position 82 is an N6-acetyllysine (K82). H92 is a heme b binding site. An S-nitrosocysteine modification is found at C93. At K144 the chain carries N6-acetyllysine.

The protein belongs to the globin family. In terms of assembly, heterotetramer of two alpha chains and two beta chains. In terms of tissue distribution, red blood cells.

Functionally, involved in oxygen transport from the lung to the various peripheral tissues. In Mesocricetus brandti (Brandt's hamster), this protein is Hemoglobin subunit beta (HBB).